Consider the following 282-residue polypeptide: Secretory carrier-associated membrane protein 3 (282 aa).

A disordered region spans residues 1–36; it reads MAGKHGRNGFEDDDVNPFAGGSVPPANNSRLPPLSH. The Cytoplasmic portion of the chain corresponds to 1–117; sequence MAGKHGRNGF…EIPIHLQRMQ (117 aa). Residues 48–92 adopt a coiled-coil conformation; it reads LDSSKDLKKKEKELQAMEAELNKRERELKRKEEAAAQAGIVIEDK. Helical transmembrane passes span 118–138, 148–168, 185–205, and 230–250; these read YLAFSSFLGLAACLFWNIIAT, VIIWLLAIIYFISGVPGAYVL, FGWFFLFYLIHIIFCVWAAVA, and IVGIFYFVGFGLFCLESLLSI. The Cytoplasmic portion of the chain corresponds to 251 to 282; sequence GVIQQVYMYFRGSGKAAEMKREAARGALSSAF.

It belongs to the SCAMP family.

The protein resides in the cell membrane. The protein localises to the cytoplasmic vesicle. It localises to the secretory vesicle membrane. Probably involved in membrane trafficking. In Oryza sativa subsp. japonica (Rice), this protein is Secretory carrier-associated membrane protein 3 (SCAMP3).